The sequence spans 153 residues: MTKSELKVKRIKNGTVIDHITANRSLNILNMLKLPDDETAIMVAINVESSDMGRKDIIKIEGRELSQDEVDKLVLLAPQATLNIIRDYQNIRKSHLHLMDEITDVVTCSNPNCITNSNEPIQKRFAVQNKQPITLRCYYCERTMEYDDIESQF.

4 residues coordinate Zn(2+): C108, C113, C137, and C140.

This sequence belongs to the PyrI family. In terms of assembly, contains catalytic and regulatory chains. It depends on Zn(2+) as a cofactor.

Its function is as follows. Involved in allosteric regulation of aspartate carbamoyltransferase. The chain is Aspartate carbamoyltransferase regulatory chain from Methanosphaera stadtmanae (strain ATCC 43021 / DSM 3091 / JCM 11832 / MCB-3).